A 169-amino-acid chain; its full sequence is Putative phosphoesterase SAR0985 (169 aa).

Histidine 34 acts as the Proton donor in catalysis. 2 short sequence motifs (HXTX) span residues 34-37 and 115-118; these read HVTI and HFTI. Residue histidine 115 is the Proton acceptor of the active site.

Belongs to the 2H phosphoesterase superfamily. YjcG family.

In Staphylococcus aureus (strain MRSA252), this protein is Putative phosphoesterase SAR0985.